Reading from the N-terminus, the 184-residue chain is ATP synthase subunit delta (184 aa).

This sequence belongs to the ATPase delta chain family. F-type ATPases have 2 components, F(1) - the catalytic core - and F(0) - the membrane proton channel. F(1) has five subunits: alpha(3), beta(3), gamma(1), delta(1), epsilon(1). F(0) has three main subunits: a(1), b(2) and c(10-14). The alpha and beta chains form an alternating ring which encloses part of the gamma chain. F(1) is attached to F(0) by a central stalk formed by the gamma and epsilon chains, while a peripheral stalk is formed by the delta and b chains.

It is found in the cell inner membrane. Its function is as follows. F(1)F(0) ATP synthase produces ATP from ADP in the presence of a proton or sodium gradient. F-type ATPases consist of two structural domains, F(1) containing the extramembraneous catalytic core and F(0) containing the membrane proton channel, linked together by a central stalk and a peripheral stalk. During catalysis, ATP synthesis in the catalytic domain of F(1) is coupled via a rotary mechanism of the central stalk subunits to proton translocation. This protein is part of the stalk that links CF(0) to CF(1). It either transmits conformational changes from CF(0) to CF(1) or is implicated in proton conduction. This chain is ATP synthase subunit delta, found in Rickettsia massiliae (strain Mtu5).